We begin with the raw amino-acid sequence, 257 residues long: AN1-type zinc finger protein 2B (257 aa).

2 AN1-type zinc fingers span residues 4–52 (PDLG…QKDI) and 94–142 (KIFT…HPTS). Cys-10, Cys-15, Cys-25, Cys-28, Cys-33, His-36, His-42, Cys-44, Cys-100, Cys-105, Cys-115, Cys-118, Cys-123, His-126, His-132, and Cys-134 together coordinate Zn(2+). The interval 141–151 (TSRAGLAAISR) is VCP/p97-interacting motif (VIM). The tract at residues 153-187 (QAVASTSTVPSPSQTMPSCTSPSRATTRSPSWTAP) is disordered. Residues 155 to 171 (VASTSTVPSPSQTMPSC) show a composition bias toward polar residues. Residues Ser-163 and Ser-173 each carry the phosphoserine modification. A compositionally biased stretch (low complexity) spans 172–186 (TSPSRATTRSPSWTA). 2 UIM domains span residues 197–216 (SEDE…TKPQ) and 221–240 (QEEE…AEYQ). Cys-254 bears the Cysteine methyl ester mark. A lipid anchor (S-geranylgeranyl cysteine) is attached at Cys-254. The short motif at 254–257 (CSLC) is the CAAX motif element. A propeptide spans 255 to 257 (SLC) (removed in mature form).

As to quaternary structure, binds 'Lys-48'-linked polyubiquitin chains of ubiquitinated proteins. Associates with the proteasome complex; upon exposure to arsenite. Interacts (via VIM motif) with VCP; the interaction is direct. Interacts with BAG6. Interacts with IGF1R (nascent precursor form). Interacts with DERL1, FAF2, NPLOC4 and UFD1; probably through VCP. In terms of processing, phosphorylated by MAPK14. Phosphorylation has no effect on association with the proteasome complex.

It localises to the endoplasmic reticulum membrane. Functionally, plays a role in protein homeostasis by regulating both the translocation and the ubiquitin-mediated proteasomal degradation of nascent proteins at the endoplasmic reticulum. It is involved in the regulation of signal-mediated translocation of proteins into the endoplasmic reticulum. It also plays a role in the ubiquitin-mediated proteasomal degradation of proteins for which signal-mediated translocation to the endoplasmic reticulum has failed. May therefore function in the endoplasmic reticulum stress-induced pre-emptive quality control, a mechanism that selectively attenuates the translocation of newly synthesized proteins into the endoplasmic reticulum and reroutes them to the cytosol for proteasomal degradation. By controlling the steady-state expression of the IGF1R receptor, indirectly regulates the insulin-like growth factor receptor signaling pathway. The polypeptide is AN1-type zinc finger protein 2B (Homo sapiens (Human)).